The following is a 456-amino-acid chain: Adenylosuccinate lyase (456 aa).

Residues 15 to 16 (RY) and 90 to 92 (NHD) contribute to the N(6)-(1,2-dicarboxyethyl)-AMP site. Lysine 94 is subject to N6-acetyllysine. 122-123 (TS) is a binding site for N(6)-(1,2-dicarboxyethyl)-AMP. The active-site Proton donor/acceptor is the histidine 171. Glutamine 247 is a N(6)-(1,2-dicarboxyethyl)-AMP binding site. The active-site Proton donor/acceptor is the serine 295. Residues serine 296, 301-303 (KVN), asparagine 309, arginine 335, and 340-344 (STVLR) each bind N(6)-(1,2-dicarboxyethyl)-AMP. Lysine 366 is modified (N6-acetyllysine).

The protein belongs to the lyase 1 family. Adenylosuccinate lyase subfamily. As to quaternary structure, homotetramer. Residues from neighboring subunits contribute catalytic and substrate-binding residues to each active site.

The enzyme catalyses N(6)-(1,2-dicarboxyethyl)-AMP = fumarate + AMP. It carries out the reaction (2S)-2-[5-amino-1-(5-phospho-beta-D-ribosyl)imidazole-4-carboxamido]succinate = 5-amino-1-(5-phospho-beta-D-ribosyl)imidazole-4-carboxamide + fumarate. Its pathway is purine metabolism; AMP biosynthesis via de novo pathway; AMP from IMP: step 2/2. The protein operates within purine metabolism; IMP biosynthesis via de novo pathway; 5-amino-1-(5-phospho-D-ribosyl)imidazole-4-carboxamide from 5-amino-1-(5-phospho-D-ribosyl)imidazole-4-carboxylate: step 2/2. Catalyzes two reactions in de novo purine nucleotide biosynthesis. Catalyzes the breakdown of 5-aminoimidazole- (N-succinylocarboxamide) ribotide (SAICAR or 2-[5-amino-1-(5-phospho-beta-D-ribosyl)imidazole-4-carboxamido]succinate) to 5-aminoimidazole-4-carboxamide ribotide (AICAR or 5-amino-1-(5-phospho-beta-D-ribosyl)imidazole-4-carboxamide) and fumarate, and of adenylosuccinate (ADS or N(6)-(1,2-dicarboxyethyl)-AMP) to adenosine monophosphate (AMP) and fumarate. The chain is Adenylosuccinate lyase (purB) from Escherichia coli O6:H1 (strain CFT073 / ATCC 700928 / UPEC).